We begin with the raw amino-acid sequence, 1424 residues long: DNA-directed RNA polymerase subunit beta' (1424 aa).

Cysteine 60, cysteine 62, cysteine 75, and cysteine 78 together coordinate Zn(2+). Residues aspartate 449, aspartate 451, and aspartate 453 each coordinate Mg(2+). Zn(2+) contacts are provided by cysteine 783, cysteine 857, cysteine 864, and cysteine 867.

The protein belongs to the RNA polymerase beta' chain family. As to quaternary structure, the RNAP catalytic core consists of 2 alpha, 1 beta, 1 beta' and 1 omega subunit. When a sigma factor is associated with the core the holoenzyme is formed, which can initiate transcription. It depends on Mg(2+) as a cofactor. Zn(2+) is required as a cofactor.

The enzyme catalyses RNA(n) + a ribonucleoside 5'-triphosphate = RNA(n+1) + diphosphate. Functionally, DNA-dependent RNA polymerase catalyzes the transcription of DNA into RNA using the four ribonucleoside triphosphates as substrates. This chain is DNA-directed RNA polymerase subunit beta', found in Treponema denticola (strain ATCC 35405 / DSM 14222 / CIP 103919 / JCM 8153 / KCTC 15104).